The sequence spans 472 residues: DNA-cytosine methyltransferase (472 aa).

The region spanning 87–457 (FRFIDLFAGI…KLLEPKIKQA (371 aa)) is the SAM-dependent MTase C5-type domain. Cys-177 is an active-site residue.

The protein belongs to the class I-like SAM-binding methyltransferase superfamily. C5-methyltransferase family.

It carries out the reaction a 2'-deoxycytidine in DNA + S-adenosyl-L-methionine = a 5-methyl-2'-deoxycytidine in DNA + S-adenosyl-L-homocysteine + H(+). In terms of biological role, this methylase recognizes the double-stranded sequence 5'-CCWGG-3', methylates C-2 on both strands. In Escherichia coli O157:H7, this protein is DNA-cytosine methyltransferase (dcm).